The following is a 212-amino-acid chain: Large ribosomal subunit protein uL1 (212 aa).

Belongs to the universal ribosomal protein uL1 family. As to quaternary structure, part of the 50S ribosomal subunit.

In terms of biological role, binds directly to 23S rRNA. Probably involved in E site tRNA release. Protein L1 is also a translational repressor protein, it controls the translation of its operon by binding to its mRNA. The chain is Large ribosomal subunit protein uL1 from Methanothermobacter thermautotrophicus (strain ATCC 29096 / DSM 1053 / JCM 10044 / NBRC 100330 / Delta H) (Methanobacterium thermoautotrophicum).